The chain runs to 179 residues: Large ribosomal subunit protein uL5 (179 aa).

This sequence belongs to the universal ribosomal protein uL5 family. As to quaternary structure, part of the 50S ribosomal subunit; part of the 5S rRNA/L5/L18/L25 subcomplex. Contacts the 5S rRNA and the P site tRNA. Forms a bridge to the 30S subunit in the 70S ribosome.

This is one of the proteins that bind and probably mediate the attachment of the 5S RNA into the large ribosomal subunit, where it forms part of the central protuberance. In the 70S ribosome it contacts protein S13 of the 30S subunit (bridge B1b), connecting the 2 subunits; this bridge is implicated in subunit movement. Contacts the P site tRNA; the 5S rRNA and some of its associated proteins might help stabilize positioning of ribosome-bound tRNAs. The polypeptide is Large ribosomal subunit protein uL5 (Francisella tularensis subsp. tularensis (strain SCHU S4 / Schu 4)).